The following is a 346-amino-acid chain: Uroporphyrinogen decarboxylase (346 aa).

Substrate contacts are provided by residues Arg-23–Arg-27, Asp-72, Tyr-155, Ser-209, and His-322.

The protein belongs to the uroporphyrinogen decarboxylase family. As to quaternary structure, homodimer.

It is found in the cytoplasm. The enzyme catalyses uroporphyrinogen III + 4 H(+) = coproporphyrinogen III + 4 CO2. Its pathway is porphyrin-containing compound metabolism; protoporphyrin-IX biosynthesis; coproporphyrinogen-III from 5-aminolevulinate: step 4/4. Catalyzes the decarboxylation of four acetate groups of uroporphyrinogen-III to yield coproporphyrinogen-III. This is Uroporphyrinogen decarboxylase from Anaeromyxobacter sp. (strain Fw109-5).